A 239-amino-acid polypeptide reads, in one-letter code: 2,3,4,5-tetrahydropyridine-2,6-dicarboxylate N-acetyltransferase (239 aa).

This sequence belongs to the transferase hexapeptide repeat family. DapH subfamily.

It carries out the reaction (S)-2,3,4,5-tetrahydrodipicolinate + acetyl-CoA + H2O = L-2-acetamido-6-oxoheptanedioate + CoA. Its pathway is amino-acid biosynthesis; L-lysine biosynthesis via DAP pathway; LL-2,6-diaminopimelate from (S)-tetrahydrodipicolinate (acetylase route): step 1/3. Catalyzes the transfer of an acetyl group from acetyl-CoA to tetrahydrodipicolinate. This Staphylococcus aureus (strain Newman) protein is 2,3,4,5-tetrahydropyridine-2,6-dicarboxylate N-acetyltransferase.